Consider the following 349-residue polypeptide: UPF0324 inner membrane protein YeiH (349 aa).

Over 1 to 12 the chain is Periplasmic; it reads MTNITLQKQHRT. The helical transmembrane segment at 13–32 threads the bilayer; sequence LWHFIPGLALSAVITGVALW. The Cytoplasmic segment spans residues 33 to 35; it reads GGS. A helical transmembrane segment spans residues 36-58; sequence IPAVAGAGFSALTLAILLGMVLG. At 59–99 the chain is on the periplasmic side; the sequence is NTIYPHIWKSCDGGVLFAKQYLLRLGIILYGFRLTFSQIAD. A helical transmembrane segment spans residues 100–122; that stretch reads VGISGIIIDVLTLSSTFLLACFL. The Cytoplasmic segment spans residues 123–131; the sequence is GQKVFGLDK. The chain crosses the membrane as a helical span at residues 132 to 151; it reads HTSWLIGAGSSICGAAAVLA. At 152-162 the chain is on the periplasmic side; it reads TEPVVKAEASK. Residues 163 to 185 traverse the membrane as a helical segment; that stretch reads VTVAVATVVIFGTVAIFLYPAIY. Residues 186 to 261 lie on the Cytoplasmic side of the membrane; that stretch reads PLMSQWFSPE…SGANSGEKSK (76 aa). Residues 262–283 traverse the membrane as a helical segment; it reads ITIPWFAILFIVVAIFNSFHLL. Residues 284–289 are Periplasmic-facing; that stretch reads PQSVVN. A helical transmembrane segment spans residues 290-312; that stretch reads MLVTLDTFLLAMAMAALGLTTHV. Topologically, residues 313–321 are cytoplasmic; that stretch reads SALKKAGAK. Residues 322-344 form a helical membrane-spanning segment; that stretch reads PLLMALVLFAWLIVGGGAINYVI. Residues 345-349 are Periplasmic-facing; sequence QSVIA.

The protein belongs to the UPF0324 family.

The protein resides in the cell inner membrane. The protein is UPF0324 inner membrane protein YeiH (yeiH) of Escherichia coli O157:H7.